Reading from the N-terminus, the 348-residue chain is Holliday junction branch migration complex subunit RuvB (348 aa).

Residues 4 to 186 (TDRIISANTV…FGIIQRLEFY (183 aa)) are large ATPase domain (RuvB-L). Residues Ile-25, Arg-26, Gly-67, Lys-70, Thr-71, Thr-72, 133–135 (EDY), Arg-176, Tyr-186, and Arg-223 each bind ATP. Residue Thr-71 coordinates Mg(2+). The interval 187–257 (SVDDLAKIVY…IADKALTMLK (71 aa)) is small ATPAse domain (RuvB-S). The interval 260-348 (PVGFDHMDHK…SSDQQQNLSL (89 aa)) is head domain (RuvB-H). 2 residues coordinate DNA: Arg-315 and Arg-320.

This sequence belongs to the RuvB family. Homohexamer. Forms an RuvA(8)-RuvB(12)-Holliday junction (HJ) complex. HJ DNA is sandwiched between 2 RuvA tetramers; dsDNA enters through RuvA and exits via RuvB. An RuvB hexamer assembles on each DNA strand where it exits the tetramer. Each RuvB hexamer is contacted by two RuvA subunits (via domain III) on 2 adjacent RuvB subunits; this complex drives branch migration. In the full resolvosome a probable DNA-RuvA(4)-RuvB(12)-RuvC(2) complex forms which resolves the HJ.

The protein localises to the cytoplasm. It carries out the reaction ATP + H2O = ADP + phosphate + H(+). The RuvA-RuvB-RuvC complex processes Holliday junction (HJ) DNA during genetic recombination and DNA repair, while the RuvA-RuvB complex plays an important role in the rescue of blocked DNA replication forks via replication fork reversal (RFR). RuvA specifically binds to HJ cruciform DNA, conferring on it an open structure. The RuvB hexamer acts as an ATP-dependent pump, pulling dsDNA into and through the RuvAB complex. RuvB forms 2 homohexamers on either side of HJ DNA bound by 1 or 2 RuvA tetramers; 4 subunits per hexamer contact DNA at a time. Coordinated motions by a converter formed by DNA-disengaged RuvB subunits stimulates ATP hydrolysis and nucleotide exchange. Immobilization of the converter enables RuvB to convert the ATP-contained energy into a lever motion, pulling 2 nucleotides of DNA out of the RuvA tetramer per ATP hydrolyzed, thus driving DNA branch migration. The RuvB motors rotate together with the DNA substrate, which together with the progressing nucleotide cycle form the mechanistic basis for DNA recombination by continuous HJ branch migration. Branch migration allows RuvC to scan DNA until it finds its consensus sequence, where it cleaves and resolves cruciform DNA. The polypeptide is Holliday junction branch migration complex subunit RuvB (Francisella philomiragia subsp. philomiragia (strain ATCC 25017 / CCUG 19701 / FSC 153 / O#319-036)).